Here is a 283-residue protein sequence, read N- to C-terminus: Formamidopyrimidine-DNA glycosylase (283 aa).

The active-site Schiff-base intermediate with DNA is the Pro2. Glu3 (proton donor) is an active-site residue. Lys61 serves as the catalytic Proton donor; for beta-elimination activity. DNA-binding residues include His94, Arg113, and Lys159. An FPG-type zinc finger spans residues 245-279 (DAYGREGESCRRCGAVMRREKFMNRSSFYCPKCQP). Arg269 functions as the Proton donor; for delta-elimination activity in the catalytic mechanism.

Belongs to the FPG family. Monomer. The cofactor is Zn(2+).

The enzyme catalyses Hydrolysis of DNA containing ring-opened 7-methylguanine residues, releasing 2,6-diamino-4-hydroxy-5-(N-methyl)formamidopyrimidine.. It catalyses the reaction 2'-deoxyribonucleotide-(2'-deoxyribose 5'-phosphate)-2'-deoxyribonucleotide-DNA = a 3'-end 2'-deoxyribonucleotide-(2,3-dehydro-2,3-deoxyribose 5'-phosphate)-DNA + a 5'-end 5'-phospho-2'-deoxyribonucleoside-DNA + H(+). Its function is as follows. Involved in base excision repair of DNA damaged by oxidation or by mutagenic agents. Acts as a DNA glycosylase that recognizes and removes damaged bases. Has a preference for oxidized purines, such as 7,8-dihydro-8-oxoguanine (8-oxoG). Has AP (apurinic/apyrimidinic) lyase activity and introduces nicks in the DNA strand. Cleaves the DNA backbone by beta-delta elimination to generate a single-strand break at the site of the removed base with both 3'- and 5'-phosphates. The chain is Formamidopyrimidine-DNA glycosylase from Mycobacterium avium (strain 104).